The following is a 429-amino-acid chain: Asparagine--tRNA ligase (429 aa).

Belongs to the class-II aminoacyl-tRNA synthetase family. Homodimer.

The protein resides in the cytoplasm. It catalyses the reaction tRNA(Asn) + L-asparagine + ATP = L-asparaginyl-tRNA(Asn) + AMP + diphosphate + H(+). In Desulforamulus reducens (strain ATCC BAA-1160 / DSM 100696 / MI-1) (Desulfotomaculum reducens), this protein is Asparagine--tRNA ligase.